Consider the following 232-residue polypeptide: Phosphatidylserine decarboxylase proenzyme (232 aa).

Serine 190 (schiff-base intermediate with substrate; via pyruvic acid) is an active-site residue. Position 190 is a pyruvic acid (Ser); by autocatalysis (serine 190).

It belongs to the phosphatidylserine decarboxylase family. PSD-A subfamily. Heterodimer of a large membrane-associated beta subunit and a small pyruvoyl-containing alpha subunit. Pyruvate serves as cofactor. Is synthesized initially as an inactive proenzyme. Formation of the active enzyme involves a self-maturation process in which the active site pyruvoyl group is generated from an internal serine residue via an autocatalytic post-translational modification. Two non-identical subunits are generated from the proenzyme in this reaction, and the pyruvate is formed at the N-terminus of the alpha chain, which is derived from the carboxyl end of the proenzyme. The post-translation cleavage follows an unusual pathway, termed non-hydrolytic serinolysis, in which the side chain hydroxyl group of the serine supplies its oxygen atom to form the C-terminus of the beta chain, while the remainder of the serine residue undergoes an oxidative deamination to produce ammonia and the pyruvoyl prosthetic group on the alpha chain.

The protein localises to the cell membrane. It catalyses the reaction a 1,2-diacyl-sn-glycero-3-phospho-L-serine + H(+) = a 1,2-diacyl-sn-glycero-3-phosphoethanolamine + CO2. It participates in phospholipid metabolism; phosphatidylethanolamine biosynthesis; phosphatidylethanolamine from CDP-diacylglycerol: step 2/2. In terms of biological role, catalyzes the formation of phosphatidylethanolamine (PtdEtn) from phosphatidylserine (PtdSer). In Bartonella bacilliformis (strain ATCC 35685 / KC583 / Herrer 020/F12,63), this protein is Phosphatidylserine decarboxylase proenzyme.